A 430-amino-acid polypeptide reads, in one-letter code: Trigger factor (430 aa).

The PPIase FKBP-type domain occupies 163 to 248; sequence GDTVVFDFAG…IHEIKAQELP (86 aa).

This sequence belongs to the FKBP-type PPIase family. Tig subfamily.

It is found in the cytoplasm. The enzyme catalyses [protein]-peptidylproline (omega=180) = [protein]-peptidylproline (omega=0). In terms of biological role, involved in protein export. Acts as a chaperone by maintaining the newly synthesized protein in an open conformation. Functions as a peptidyl-prolyl cis-trans isomerase. This Exiguobacterium sibiricum (strain DSM 17290 / CCUG 55495 / CIP 109462 / JCM 13490 / 255-15) protein is Trigger factor.